Reading from the N-terminus, the 314-residue chain is Cathepsin L 2 (314 aa).

Residues 1–24 (MMLLGASLYLNNTQEVSDEIDTAN) form the signal peptide. Positions 25–109 (LYANWKMKYN…NASNANFQYK (85 aa)) are cleaved as a propeptide — activation peptide. 3 disulfide bridges follow: cysteine 132–cysteine 175, cysteine 166–cysteine 207, and cysteine 259–cysteine 302. The active site involves cysteine 135. Catalysis depends on residues histidine 265 and asparagine 282.

This sequence belongs to the peptidase C1 family.

Its subcellular location is the secreted. It carries out the reaction Specificity close to that of papain. As compared to cathepsin B, cathepsin L exhibits higher activity toward protein substrates, but has little activity on Z-Arg-Arg-NHMec, and no peptidyl-dipeptidase activity.. Its function is as follows. May be involved in extracellular digestion. The polypeptide is Cathepsin L 2 (Paramecium tetraurelia).